We begin with the raw amino-acid sequence, 452 residues long: Phosphoglucosamine mutase (452 aa).

The Phosphoserine intermediate role is filled by Ser112. Residues Ser112, Asp251, Asp253, and Asp255 each contribute to the Mg(2+) site. Ser112 is modified (phosphoserine).

It belongs to the phosphohexose mutase family. The cofactor is Mg(2+). In terms of processing, activated by phosphorylation.

The catalysed reaction is alpha-D-glucosamine 1-phosphate = D-glucosamine 6-phosphate. In terms of biological role, catalyzes the conversion of glucosamine-6-phosphate to glucosamine-1-phosphate. The polypeptide is Phosphoglucosamine mutase (Bordetella bronchiseptica (strain ATCC BAA-588 / NCTC 13252 / RB50) (Alcaligenes bronchisepticus)).